The primary structure comprises 431 residues: 23S rRNA (uracil(1939)-C(5))-methyltransferase RlmD (431 aa).

A TRAM domain is found at 10–68 (RVTTRQIITVKVNDLDSFGQGVARHNGKALFIPGLLPEESAEVIITEDKKQFARARVSR). [4Fe-4S] cluster is bound by residues C81, C87, C90, and C161. S-adenosyl-L-methionine-binding residues include Q264, F293, N298, E314, N341, and D362. The active-site Nucleophile is the C388.

This sequence belongs to the class I-like SAM-binding methyltransferase superfamily. RNA M5U methyltransferase family. RlmD subfamily.

The catalysed reaction is uridine(1939) in 23S rRNA + S-adenosyl-L-methionine = 5-methyluridine(1939) in 23S rRNA + S-adenosyl-L-homocysteine + H(+). In terms of biological role, catalyzes the formation of 5-methyl-uridine at position 1939 (m5U1939) in 23S rRNA. This chain is 23S rRNA (uracil(1939)-C(5))-methyltransferase RlmD, found in Salmonella typhimurium (strain LT2 / SGSC1412 / ATCC 700720).